The sequence spans 528 residues: Protein BFR2 (528 aa).

Disordered stretches follow at residues 14–158 and 372–401; these read NKSK…ADAK and DSNS…NNAI. Acidic residues predominate over residues 132–146; sequence DSGDSDSDSGSDAGE.

The protein belongs to the AATF family.

It localises to the nucleus. It is found in the nucleolus. This chain is Protein BFR2 (BFR2), found in Eremothecium gossypii (strain ATCC 10895 / CBS 109.51 / FGSC 9923 / NRRL Y-1056) (Yeast).